The chain runs to 394 residues: Phosphoglycerate kinase (394 aa).

Residues 21-23 (DFN), Arg-36, 59-62 (HLGR), Arg-118, and Arg-151 each bind substrate. Ser-183 carries the post-translational modification Phosphoserine. Lys-201 and Gly-292 together coordinate ATP. A Phosphothreonine modification is found at Thr-299. Residues Glu-323 and 350–353 (GGDS) each bind ATP.

It belongs to the phosphoglycerate kinase family. In terms of assembly, monomer.

It localises to the cytoplasm. It carries out the reaction (2R)-3-phosphoglycerate + ATP = (2R)-3-phospho-glyceroyl phosphate + ADP. The protein operates within carbohydrate degradation; glycolysis; pyruvate from D-glyceraldehyde 3-phosphate: step 2/5. The protein is Phosphoglycerate kinase of Bacillus thuringiensis (strain Al Hakam).